The chain runs to 596 residues: MQNLALISLFSPFVAFLFASCFALSEKKQFVGIICSLLVALSAFCSLYLLFCNEAFNVSLFEWFAGVNFGFDIDAISLTMMSVVGIVATCVHFYSIFYMAHDEGFNKFFAYLGLFVFSMLFLVMSDNFLGLFVGWEGVGLCSWLLIGFWYKNDTYSFAANEAFIMNRIADLGMLLGIFWLYLQAGTLKYDEVFSMAQSLDHNALILIATCLFIGAMGKSAQFPFHTWLADAMAGPTPVSALIHAATMVTAGVYLVIRASTLYDLVPEVSYIIALLGAFVAIFAASMALVVRDLKRIIAYSTLSQLGYMFVAAGLGAYGIALFHLATHAFFKSLLFLGAGNVMHAMNDKLDIKKMGGLFKPLKITAILMCIGSLALAGIYPFAGFFSKDLILGYSFISFHHGIFLVLLIAAFLTAFYSFRLLMLVFFTPARHDEHPHEASKIALLAMSPLMVLAIIAGFFEHSFFEYLSTKLVFIDAQNQIVMICASVAAILGAILAIFAYKNSWFKESIEENKIHKLLSNDYFIPQFYHQFIVSKYESLCAILKHCDLYIFDRIVEKIALYSQNISQKMIMPNSLNLMLRFLVAAFVILLILVWMV.

Transmembrane regions (helical) follow at residues 4-24, 31-51, 80-100, 104-124, 162-182, 204-224, 236-256, 270-290, 305-325, 365-385, 395-415, 441-461, 480-500, and 576-596; these read LALI…CFAL, VGII…YLLF, MMSV…FYMA, GFNK…FLVM, AFIM…WLYL, LILI…QFPF, TPVS…YLVI, YIIA…ALVV, LGYM…FHLA, AILM…AGFF, FISF…LTAF, IALL…FFEH, IVMI…IFAY, and NLML…VWMV.

This sequence belongs to the complex I subunit 5 family.

Its subcellular location is the cell membrane. The enzyme catalyses a quinone + NADH + 5 H(+)(in) = a quinol + NAD(+) + 4 H(+)(out). Functionally, NDH-1 shuttles electrons from NADH, via FMN and iron-sulfur (Fe-S) centers, to quinones in the respiratory chain. The immediate electron acceptor for the enzyme in this species is believed to be menaquinone. Couples the redox reaction to proton translocation (for every two electrons transferred, four hydrogen ions are translocated across the cytoplasmic membrane), and thus conserves the redox energy in a proton gradient. The polypeptide is NADH-quinone oxidoreductase subunit L (nuoL) (Campylobacter jejuni subsp. jejuni serotype O:2 (strain ATCC 700819 / NCTC 11168)).